A 331-amino-acid polypeptide reads, in one-letter code: MIPVIRSFLSLLLCVGLTFGLGGCVTTSLPMAAASPWNSQKLGIESNPLDVAFTNESHGFLVGSNRLVMETSDGGETWEEREIDLPADENFRLISIDFNGDEGWIAGQPGLLLHSDDAGQSWSRLLLDTKLPGDPYLITALGSKKAELATNVGAIYQSSDAGKSWQAEVVDAAGSVRDLRRGDDGRYVSVSSLGNFFSTWDPGQSNWQVHQRVSSQRLQSMGYQPDGQMWMVTRGAQLRFNPEGGDYEEWSKPVIPITNGYGYLDMAWDPQGNIWAGGGNGTLLVSSDGGKEWEKDPVGTATPSNFTRFVFLGGNKAFALGERGAILRWVG.

The N-terminal stretch at 1 to 23 is a signal peptide; the sequence is MIPVIRSFLSLLLCVGLTFGLGG. A lipid anchor (N-palmitoyl cysteine) is attached at Cys24. The S-diacylglycerol cysteine moiety is linked to residue Cys24.

This sequence belongs to the Ycf48 family. Part of early PSII assembly complexes which includes D1 (psbA) and PsbI; not found in mature PSII. Binds to the lumenal side of PSII complexes. Interacts with YidC.

It is found in the cellular thylakoid membrane. Functionally, a factor required for optimal assembly of photosystem II (PSII), acting in the early stages of PSII assembly. Also plays a role in replacement of photodamaged D1 (psbA). Assists YidC in synthesis of chlorophyll-binding proteins. In Synechococcus sp. (strain RCC307), this protein is Photosystem II assembly lipoprotein Ycf48.